A 349-amino-acid chain; its full sequence is Sphingomyelinase D (349 aa).

Residues 1–18 (MLLSSLISLALLSSQVVA) form the signal peptide. Residue His-52 is part of the active site. Residues Glu-72, Asp-74, and Asp-123 each coordinate Mg(2+). The SMD-tail signature appears at 310-317 (ATNDNNPW).

The protein belongs to the sphingomyelinase D/phospholipase D family. Requires Mg(2+) as cofactor.

The protein localises to the secreted. The enzyme catalyses a sphingomyelin + H2O = an N-acylsphing-4-enine 1-phosphate + choline + H(+). Catalyzes the hydrolysis of sphingomyelin. Sphingomyelinases D are produced by some spider in their venoms, but also by arthropods such as ticks, or pathogenic bacteria and fungi. They might play a role in pathogenicity through different mechanisms, such as membrane destabilization and host cell penetration, but also pulmonary inflammation and cutaneous lesions. The chain is Sphingomyelinase D from Uncinocarpus reesii (strain UAMH 1704).